A 374-amino-acid chain; its full sequence is UDP-N-acetylglucosamine--N-acetylmuramyl-(pentapeptide) pyrophosphoryl-undecaprenol N-acetylglucosamine transferase (374 aa).

Residues 13–15, Asn124, Arg165, Ser193, and Gln294 each bind UDP-N-acetyl-alpha-D-glucosamine; that span reads TGG.

The protein belongs to the glycosyltransferase 28 family. MurG subfamily.

It localises to the cell inner membrane. The catalysed reaction is di-trans,octa-cis-undecaprenyl diphospho-N-acetyl-alpha-D-muramoyl-L-alanyl-D-glutamyl-meso-2,6-diaminopimeloyl-D-alanyl-D-alanine + UDP-N-acetyl-alpha-D-glucosamine = di-trans,octa-cis-undecaprenyl diphospho-[N-acetyl-alpha-D-glucosaminyl-(1-&gt;4)]-N-acetyl-alpha-D-muramoyl-L-alanyl-D-glutamyl-meso-2,6-diaminopimeloyl-D-alanyl-D-alanine + UDP + H(+). The protein operates within cell wall biogenesis; peptidoglycan biosynthesis. Functionally, cell wall formation. Catalyzes the transfer of a GlcNAc subunit on undecaprenyl-pyrophosphoryl-MurNAc-pentapeptide (lipid intermediate I) to form undecaprenyl-pyrophosphoryl-MurNAc-(pentapeptide)GlcNAc (lipid intermediate II). In Rhizobium meliloti (strain 1021) (Ensifer meliloti), this protein is UDP-N-acetylglucosamine--N-acetylmuramyl-(pentapeptide) pyrophosphoryl-undecaprenol N-acetylglucosamine transferase.